Here is an 85-residue protein sequence, read N- to C-terminus: Small ribosomal subunit protein bS18 (85 aa).

Positions 1–12 (MAFAQAGGGGGQ) are enriched in gly residues. The interval 1 to 22 (MAFAQAGGGGGQRRPFFRRRKT) is disordered.

This sequence belongs to the bacterial ribosomal protein bS18 family. Part of the 30S ribosomal subunit. Forms a tight heterodimer with protein bS6.

Functionally, binds as a heterodimer with protein bS6 to the central domain of the 16S rRNA, where it helps stabilize the platform of the 30S subunit. This Azorhizobium caulinodans (strain ATCC 43989 / DSM 5975 / JCM 20966 / LMG 6465 / NBRC 14845 / NCIMB 13405 / ORS 571) protein is Small ribosomal subunit protein bS18.